The primary structure comprises 177 residues: MQQRGVTIWLTGLSGAGKTTITHALEKKLRDSGYRLEVLDGDVVRTNLTKGLGFSKEDRDTNIRRIGFVSHLLTRNGVIVLVSAISPYAAIRQEVKHTIGDFLEVFVNAPLAVCEERDVKGLYAKARSGEIKGFTGIDDPYEPPTNPDVECRTDLEELDESVGKIWQKLVDLKYIEG.

12-19 contributes to the ATP binding site; the sequence is GLSGAGKT. The Phosphoserine intermediate role is filled by serine 86.

The protein belongs to the APS kinase family.

The catalysed reaction is adenosine 5'-phosphosulfate + ATP = 3'-phosphoadenylyl sulfate + ADP + H(+). It participates in sulfur metabolism; hydrogen sulfide biosynthesis; sulfite from sulfate: step 2/3. Its function is as follows. Catalyzes the synthesis of activated sulfate. The protein is Probable adenylyl-sulfate kinase (cysC) of Synechocystis sp. (strain ATCC 27184 / PCC 6803 / Kazusa).